The sequence spans 367 residues: Aflatoxin B1 aldehyde reductase member 2 (367 aa).

The span at M1–S31 shows a compositional bias: low complexity. A disordered region spans residues M1 to R45. Residues M1–P46 constitute a mitochondrion transit peptide. The residue at position 40 (S40) is a Phosphoserine. The residue at position 48 (T48) is a Phosphothreonine. An NADP(+)-binding site is contributed by D80. Residue Y85 is the Proton donor of the active site. The residue at position 136 (K136) is an N6-acetyllysine. Residue H149 coordinates substrate. NADP(+)-binding positions include S179–N180, Q205, N234–K244, and R258. K244 is modified (N6-succinyllysine). 2 residues coordinate substrate: Y268 and R271. An NADP(+)-binding site is contributed by S326–N334. R367 lines the substrate pocket.

This sequence belongs to the aldo/keto reductase family. Aldo/keto reductase 2 subfamily. As to quaternary structure, homodimer. As to expression, expressed in liver, kidney, testis and brain with low levels in skeletal muscle, spleen, heart and lung.

Its subcellular location is the mitochondrion. The protein localises to the golgi apparatus. It localises to the cytoplasm. It carries out the reaction 4-hydroxybutanoate + NADP(+) = succinate semialdehyde + NADPH + H(+). Inhibited by citrate, succinate and tartrate. In terms of biological role, catalyzes the NADPH-dependent reduction of succinic semialdehyde to gamma-hydroxybutyrate. May have an important role in producing the neuromodulator gamma-hydroxybutyrate (GHB). Has broad substrate specificity. Can reduce the dialdehyde protein-binding form of aflatoxin B1 (AFB1) to the non-binding AFB1 dialcohol. May be involved in protection of liver against the toxic and carcinogenic effects of AFB1, a potent hepatocarcinogen. The chain is Aflatoxin B1 aldehyde reductase member 2 from Mus musculus (Mouse).